The sequence spans 313 residues: MKSHQFSTALCQNTTQSNGQPLRFPSPAKLNLFLYINGKLPNGYHELQTLFQFLDFGDWLDISIREQDNQIVLTPEIPNLKTENNLIYRAAKLLQEKANIQLGANIHLDKILPMGGGVGGGSSNAATALVSLNYLWQANLSIDELAKLGLTLGADVPIFVYGQAAFAEGVGEKITYCEPAEKWFVILKPDDSISTAVIFQDPNLPRNTPKKSLEQLLSEPYKNDCEKVVINHYSNVEKALNWLLQYAPARLTGTGACVFAEFDHEAEAQAVFRQKPEAFFGFVAKGLNVSPLHAMLKQLSSTHTHRQSKPEVL.

The active site involves Lys29. An ATP-binding site is contributed by 113–123; the sequence is PMGGGVGGGSS. Asp155 is an active-site residue.

The protein belongs to the GHMP kinase family. IspE subfamily.

It carries out the reaction 4-CDP-2-C-methyl-D-erythritol + ATP = 4-CDP-2-C-methyl-D-erythritol 2-phosphate + ADP + H(+). The protein operates within isoprenoid biosynthesis; isopentenyl diphosphate biosynthesis via DXP pathway; isopentenyl diphosphate from 1-deoxy-D-xylulose 5-phosphate: step 3/6. Its function is as follows. Catalyzes the phosphorylation of the position 2 hydroxy group of 4-diphosphocytidyl-2C-methyl-D-erythritol. The chain is 4-diphosphocytidyl-2-C-methyl-D-erythritol kinase from Haemophilus influenzae (strain 86-028NP).